A 32-amino-acid chain; its full sequence is MSDIN-like toxin proprotein 1 (32 aa).

A propeptide spanning residues 1–10 (MSDINATRLP) is cleaved from the precursor. Residues 11–18 (IFWFIYFP) constitute a cross-link (cyclopeptide (Ile-Pro)). The propeptide occupies 19 to 32 (CVSDVDSTLTRGER).

The protein belongs to the MSDIN fungal toxin family. Processed by the macrocyclase-peptidase enzyme POPB to yield a toxic cyclic octapeptide. POPB first removes 10 residues from the N-terminus. Conformational trapping of the remaining peptide forces the enzyme to release this intermediate rather than proceed to macrocyclization. The enzyme rebinds the remaining peptide in a different conformation and catalyzes macrocyclization of the N-terminal 8 residues. In terms of tissue distribution, expressed in basidiocarps.

In terms of biological role, probable toxin that belongs to the MSDIN-like toxin family responsible for a large number of food poisoning cases and deaths. The sequence is that of MSDIN-like toxin proprotein 1 from Amanita exitialis (Guangzhou destroying angel).